Here is a 329-residue protein sequence, read N- to C-terminus: MSAYIIETLIKILILVAVFSALGGFATYIERKVLAYFQRRLGPCYVGPFGLLQVAADGIKLFTKEDIIPQGANKFIFTLAPIIAMVSAFVSMAPIPFFPNFTLFGYEIKPLISDINIGFLFFLAVGSAGIYAPILAGLASNNKYSLIGSARATIQLLSFEVVSTLTILAPLMVVGSLSLVEINHYQSGGFLDWLVFKQPLAFVLFLIASYAELNRTPFDLLEHEAEIVAGYCTEYSGLKWGMFFLAEYAHLFAFSFVISIVFFGGFNAWGFIPGGIAILIKAGFFVFLSMWVRATYPHVRPDQLMDMCWKIMLPLALLNIVLTGIIILI.

Transmembrane regions (helical) follow at residues 9-29, 42-62, 75-95, 117-137, 154-174, 188-208, 238-258, 269-291, and 309-329; these read LIKI…ATYI, GPCY…IKLF, FIFT…MAPI, IGFL…ILAG, IQLL…LMVV, GGFL…FLIA, LKWG…SFVI, WGFI…LSMW, and WKIM…IILI.

The protein belongs to the complex I subunit 1 family. NDH-1 is composed of 14 different subunits. Subunits NuoA, H, J, K, L, M, N constitute the membrane sector of the complex.

Its subcellular location is the cell inner membrane. It carries out the reaction a quinone + NADH + 5 H(+)(in) = a quinol + NAD(+) + 4 H(+)(out). NDH-1 shuttles electrons from NADH, via FMN and iron-sulfur (Fe-S) centers, to quinones in the respiratory chain. The immediate electron acceptor for the enzyme in this species is believed to be ubiquinone. Couples the redox reaction to proton translocation (for every two electrons transferred, four hydrogen ions are translocated across the cytoplasmic membrane), and thus conserves the redox energy in a proton gradient. This subunit may bind ubiquinone. The protein is NADH-quinone oxidoreductase subunit H of Helicobacter pylori (strain ATCC 700392 / 26695) (Campylobacter pylori).